Consider the following 652-residue polypeptide: Set1 complex component ash2 (652 aa).

The tract at residues 1-32 (MLAHGSNDYGVSLKGNKTGSSPSKASSLNWNE) is disordered. Polar residues predominate over residues 15 to 32 (GNKTGSSPSKASSLNWNE). The PHD-type zinc finger occupies 40 to 94 (NTYCYCGKDRNLRFPDLQCSVCLNMFHLSCLSPPCTSMMGFSTNYQFVCKHCTED). 8 residues coordinate Zn(2+): cysteine 43, cysteine 45, cysteine 58, cysteine 61, histidine 66, cysteine 69, cysteine 88, and cysteine 91. A disordered region spans residues 234–270 (RLVETETPPPSSSKLKEDYKDSKREMKRSNTPWSNAS). Residues 247-261 (KLKEDYKDSKREMKR) show a composition bias toward basic and acidic residues. The B30.2/SPRY domain occupies 330–519 (EAAKDLPNVM…KHNRYIDLPY (190 aa)).

The protein belongs to the cclA family. Component of the Set1 complex composed of ash2, sdc1, set1, shg1, spp1, swd1, swd2 and swd3. Component of the Lid2 complex composed of ash2, jmj3, lid2, sdc1 and snt2.

Its subcellular location is the nucleus. Functionally, component of the COMPASS (Set1C) complex that specifically mono-, di- and trimethylates histone H3 to form H3K4me1/2/3, which subsequently plays a role in telomere length maintenance and transcription elongation regulation. Regulates MAPK pathway and sporulation through H3K4 methylation. In Schizosaccharomyces pombe (strain 972 / ATCC 24843) (Fission yeast), this protein is Set1 complex component ash2.